The following is a 213-amino-acid chain: Orotate phosphoribosyltransferase (213 aa).

Residue K26 coordinates 5-phospho-alpha-D-ribose 1-diphosphate. Residue 34 to 35 participates in orotate binding; the sequence is FF. Residues 72-73, R99, K100, K103, H105, and 124-132 contribute to the 5-phospho-alpha-D-ribose 1-diphosphate site; these read YK and DDVITAGTA. Residues T128 and R156 each contribute to the orotate site.

This sequence belongs to the purine/pyrimidine phosphoribosyltransferase family. PyrE subfamily. In terms of assembly, homodimer. Requires Mg(2+) as cofactor.

It carries out the reaction orotidine 5'-phosphate + diphosphate = orotate + 5-phospho-alpha-D-ribose 1-diphosphate. It participates in pyrimidine metabolism; UMP biosynthesis via de novo pathway; UMP from orotate: step 1/2. In terms of biological role, catalyzes the transfer of a ribosyl phosphate group from 5-phosphoribose 1-diphosphate to orotate, leading to the formation of orotidine monophosphate (OMP). The protein is Orotate phosphoribosyltransferase of Pseudomonas putida (strain W619).